The following is a 382-amino-acid chain: Chaperone protein DnaJ (382 aa).

A J domain is found at 6 to 70; that stretch reads DYYEILGLPK…EKRAQYDRFG (65 aa). The CR-type zinc-finger motif lies at 131–213; the sequence is GVRKDIDIPR…CGGAGRVRNK (83 aa). Residues C144, C147, C161, C164, C187, C190, C201, and C204 each coordinate Zn(2+). 4 CXXCXGXG motif repeats span residues 144–151, 161–168, 187–194, and 201–208; these read CSTCSGTG, CPTCGGTG, CSTCHGRG, and CPVCGGAG. A disordered region spans residues 146-168; sequence TCSGTGAKPGTSPKRCPTCGGTG. A disordered region spans residues 348–382; sequence FENLSKGKKPQEEEKSKAEKHKKGIFEKVKDAFES. Residues 371–382 show a composition bias toward basic and acidic residues; sequence GIFEKVKDAFES.

Belongs to the DnaJ family. In terms of assembly, homodimer. Zn(2+) is required as a cofactor.

It is found in the cytoplasm. Functionally, participates actively in the response to hyperosmotic and heat shock by preventing the aggregation of stress-denatured proteins and by disaggregating proteins, also in an autonomous, DnaK-independent fashion. Unfolded proteins bind initially to DnaJ; upon interaction with the DnaJ-bound protein, DnaK hydrolyzes its bound ATP, resulting in the formation of a stable complex. GrpE releases ADP from DnaK; ATP binding to DnaK triggers the release of the substrate protein, thus completing the reaction cycle. Several rounds of ATP-dependent interactions between DnaJ, DnaK and GrpE are required for fully efficient folding. Also involved, together with DnaK and GrpE, in the DNA replication of plasmids through activation of initiation proteins. The chain is Chaperone protein DnaJ from Methanosarcina acetivorans (strain ATCC 35395 / DSM 2834 / JCM 12185 / C2A).